The following is a 149-amino-acid chain: Transcriptional repressor NrdR (149 aa).

A zinc finger spans residues Cys-3–Cys-34. Residues Pro-49 to Glu-139 enclose the ATP-cone domain.

It belongs to the NrdR family. Zn(2+) is required as a cofactor.

In terms of biological role, negatively regulates transcription of bacterial ribonucleotide reductase nrd genes and operons by binding to NrdR-boxes. The protein is Transcriptional repressor NrdR of Vibrio cholerae serotype O1 (strain ATCC 39541 / Classical Ogawa 395 / O395).